The primary structure comprises 572 residues: Proline--tRNA ligase (572 aa).

This sequence belongs to the class-II aminoacyl-tRNA synthetase family. ProS type 1 subfamily. In terms of assembly, homodimer.

It localises to the cytoplasm. The catalysed reaction is tRNA(Pro) + L-proline + ATP = L-prolyl-tRNA(Pro) + AMP + diphosphate. Its function is as follows. Catalyzes the attachment of proline to tRNA(Pro) in a two-step reaction: proline is first activated by ATP to form Pro-AMP and then transferred to the acceptor end of tRNA(Pro). As ProRS can inadvertently accommodate and process non-cognate amino acids such as alanine and cysteine, to avoid such errors it has two additional distinct editing activities against alanine. One activity is designated as 'pretransfer' editing and involves the tRNA(Pro)-independent hydrolysis of activated Ala-AMP. The other activity is designated 'posttransfer' editing and involves deacylation of mischarged Ala-tRNA(Pro). The misacylated Cys-tRNA(Pro) is not edited by ProRS. The polypeptide is Proline--tRNA ligase (Haemophilus influenzae (strain PittEE)).